Consider the following 423-residue polypeptide: Serine hydroxymethyltransferase 2 (423 aa).

(6S)-5,6,7,8-tetrahydrofolate is bound by residues L121 and G125–L127. At K230 the chain carries N6-(pyridoxal phosphate)lysine. S356–F358 contributes to the (6S)-5,6,7,8-tetrahydrofolate binding site.

The protein belongs to the SHMT family. Homodimer. The cofactor is pyridoxal 5'-phosphate.

Its subcellular location is the cytoplasm. The catalysed reaction is (6R)-5,10-methylene-5,6,7,8-tetrahydrofolate + glycine + H2O = (6S)-5,6,7,8-tetrahydrofolate + L-serine. Its pathway is one-carbon metabolism; tetrahydrofolate interconversion. The protein operates within amino-acid biosynthesis; glycine biosynthesis; glycine from L-serine: step 1/1. In terms of biological role, catalyzes the reversible interconversion of serine and glycine with tetrahydrofolate (THF) serving as the one-carbon carrier. This reaction serves as the major source of one-carbon groups required for the biosynthesis of purines, thymidylate, methionine, and other important biomolecules. Also exhibits THF-independent aldolase activity toward beta-hydroxyamino acids, producing glycine and aldehydes, via a retro-aldol mechanism. The protein is Serine hydroxymethyltransferase 2 of Pectobacterium atrosepticum (strain SCRI 1043 / ATCC BAA-672) (Erwinia carotovora subsp. atroseptica).